The primary structure comprises 357 residues: Ribosomal RNA large subunit methyltransferase M (357 aa).

Residues S183, 216–219, D235, D255, and D271 contribute to the S-adenosyl-L-methionine site; that span reads APGG. Catalysis depends on K300, which acts as the Proton acceptor.

Belongs to the class I-like SAM-binding methyltransferase superfamily. RNA methyltransferase RlmE family. RlmM subfamily. As to quaternary structure, monomer.

It is found in the cytoplasm. The catalysed reaction is cytidine(2498) in 23S rRNA + S-adenosyl-L-methionine = 2'-O-methylcytidine(2498) in 23S rRNA + S-adenosyl-L-homocysteine + H(+). Catalyzes the 2'-O-methylation at nucleotide C2498 in 23S rRNA. The protein is Ribosomal RNA large subunit methyltransferase M of Pseudomonas fluorescens (strain Pf0-1).